Consider the following 190-residue polypeptide: Ohanin (190 aa).

The first 20 residues, 1-20 (MLLFTLCFFADQENGGKALA), serve as a signal peptide directing secretion. The B30.2/SPRY domain occupies 21–127 (SPPGNWQKAD…RIWQKGLWWL (107 aa)). A propeptide spanning residues 128-190 (RRLETDSDKL…IGARVSLANL (63 aa)) is cleaved from the precursor.

Expressed by the venom gland.

It is found in the secreted. In terms of biological role, neurotoxin that produces dose-dependent hypolocomotion and hyperalgesia in mice. May directly act on the central nervous system, as it is 6500-fold more potent when administered intracerebroventricularly than intraperitoneal. This chain is Ohanin, found in Ophiophagus hannah (King cobra).